Consider the following 417-residue polypeptide: Histidine--tRNA ligase (417 aa).

The protein belongs to the class-II aminoacyl-tRNA synthetase family. Homodimer.

The protein localises to the cytoplasm. The enzyme catalyses tRNA(His) + L-histidine + ATP = L-histidyl-tRNA(His) + AMP + diphosphate + H(+). This chain is Histidine--tRNA ligase, found in Nitratidesulfovibrio vulgaris (strain DP4) (Desulfovibrio vulgaris).